A 135-amino-acid polypeptide reads, in one-letter code: Large ribosomal subunit protein uL16c (135 aa).

The disordered stretch occupies residues 1-20 (MLSPKRTRFRKQHRGRMKGK).

It belongs to the universal ribosomal protein uL16 family. As to quaternary structure, part of the 50S ribosomal subunit.

Its subcellular location is the plastid. It localises to the chloroplast. The sequence is that of Large ribosomal subunit protein uL16c from Landoltia punctata (Dotted duckmeat).